Here is a 349-residue protein sequence, read N- to C-terminus: GDSL esterase/lipase At2g19050 (349 aa).

Positions Met1–Ala23 are cleaved as a signal peptide. The Nucleophile role is filled by Ser38. N-linked (GlcNAc...) asparagine glycosylation is present at Asn49. Catalysis depends on residues Asp316 and His319.

It belongs to the 'GDSL' lipolytic enzyme family.

Its subcellular location is the secreted. The sequence is that of GDSL esterase/lipase At2g19050 from Arabidopsis thaliana (Mouse-ear cress).